Consider the following 840-residue polypeptide: Intracellular phospholipase A1 (840 aa).

Disordered regions lie at residues 1–142 (MSGS…RRRK) and 666–718 (KKNK…AANA). The span at 26–39 (GKVKQKEKPKEKQM) shows a compositional bias: basic and acidic residues. The span at 97–111 (SRPSGLPSNGNPGSS) shows a compositional bias: low complexity. In terms of domain architecture, DDHD spans 564–827 (LEFKVKYLFA…ALFLANVLYC (264 aa)). Residues 668–680 (NKDDKTADARSGG) show a composition bias toward basic and acidic residues. Positions 681–694 (DDENEDEDECDSDE) are enriched in acidic residues.

The protein belongs to the PA-PLA1 family.

The enzyme catalyses 1,2-dihexadecanoyl-sn-glycero-3-phospho-(1D-myo-inositol) + H2O = 2-hexadecanoyl-sn-glycero-3-phospho-(1D-myo-inositol) + hexadecanoate + H(+). It catalyses the reaction a 1,2-diacyl-sn-glycero-3-phospho-L-serine + H2O = a 2-acyl-sn-glycero-3-phospho-L-serine + a fatty acid + H(+). It carries out the reaction 1-hexadecanoyl-2-(9Z-octadecenoyl)-sn-glycero-3-phospho-L-serine + H2O = 2-(9Z-octadecenoyl)-sn-glycero-3-phospho-L-serine + hexadecanoate + H(+). The catalysed reaction is 1,2-di-(9Z-octadecenoyl)-sn-glycero-3-phosphocholine + H2O = (9Z-octadecenoyl)-sn-glycero-3-phosphocholine + (9Z)-octadecenoate + H(+). The enzyme catalyses a 1,2-diacyl-sn-glycero-3-phosphocholine + H2O = a 1-acyl-sn-glycero-3-phosphocholine + a fatty acid + H(+). It catalyses the reaction 1,2-dihexadecanoyl-sn-glycero-3-phosphocholine + H2O = 1-hexadecanoyl-sn-glycero-3-phosphocholine + hexadecanoate + H(+). Inhibited by E-6-bromomethylene-3-1-naphthalenyl-2H-tetrahydropyran-2-one (BEL) in vitro. Its function is as follows. Hydrolyzes the ester bond at the sn-1 position of glycerophospholipids and produces 2-acyl lysophospholipids, being phosphatidylinositol (PI) its major substrate. PI is a versatile lipid that not only serves as a structural component of cellular membranes, but also plays important roles in signal transduction through distinct phosphorylated derivatives of the inositol head group. Catalyzes the hydrolysis of phosphatidylcholine at sn-2 position in vitro. Regulates asymmetric division, an important property of stem cells in C.elegans, by controlling the subcellular localizations of beta-catenin. In Caenorhabditis elegans, this protein is Intracellular phospholipase A1.